A 553-amino-acid chain; its full sequence is Probable cytochrome P450 301a1, mitochondrial (553 aa).

Cys502 lines the heme pocket.

Belongs to the cytochrome P450 family. It depends on heme as a cofactor.

It is found in the mitochondrion membrane. This chain is Probable cytochrome P450 301a1, mitochondrial (Cyp301a1), found in Drosophila melanogaster (Fruit fly).